We begin with the raw amino-acid sequence, 213 residues long: Leucyl/phenylalanyl-tRNA--protein transferase (213 aa).

This sequence belongs to the L/F-transferase family.

Its subcellular location is the cytoplasm. It catalyses the reaction N-terminal L-lysyl-[protein] + L-leucyl-tRNA(Leu) = N-terminal L-leucyl-L-lysyl-[protein] + tRNA(Leu) + H(+). It carries out the reaction N-terminal L-arginyl-[protein] + L-leucyl-tRNA(Leu) = N-terminal L-leucyl-L-arginyl-[protein] + tRNA(Leu) + H(+). The catalysed reaction is L-phenylalanyl-tRNA(Phe) + an N-terminal L-alpha-aminoacyl-[protein] = an N-terminal L-phenylalanyl-L-alpha-aminoacyl-[protein] + tRNA(Phe). In terms of biological role, functions in the N-end rule pathway of protein degradation where it conjugates Leu, Phe and, less efficiently, Met from aminoacyl-tRNAs to the N-termini of proteins containing an N-terminal arginine or lysine. The protein is Leucyl/phenylalanyl-tRNA--protein transferase of Rhodospirillum rubrum (strain ATCC 11170 / ATH 1.1.1 / DSM 467 / LMG 4362 / NCIMB 8255 / S1).